Consider the following 144-residue polypeptide: Small ribosomal subunit protein uS12 (144 aa).

D103 is modified (3-methylthioaspartic acid). A disordered region spans residues 121–144 (VANRKQGRSKYGTKKASAVPAKKK).

The protein belongs to the universal ribosomal protein uS12 family. Part of the 30S ribosomal subunit. Contacts proteins S8 and S17. May interact with IF1 in the 30S initiation complex.

Its function is as follows. With S4 and S5 plays an important role in translational accuracy. Functionally, interacts with and stabilizes bases of the 16S rRNA that are involved in tRNA selection in the A site and with the mRNA backbone. Located at the interface of the 30S and 50S subunits, it traverses the body of the 30S subunit contacting proteins on the other side and probably holding the rRNA structure together. The combined cluster of proteins S8, S12 and S17 appears to hold together the shoulder and platform of the 30S subunit. This chain is Small ribosomal subunit protein uS12, found in Roseiflexus castenholzii (strain DSM 13941 / HLO8).